Here is a 186-residue protein sequence, read N- to C-terminus: Elongation factor P (186 aa).

Belongs to the elongation factor P family.

The protein resides in the cytoplasm. Its pathway is protein biosynthesis; polypeptide chain elongation. Functionally, involved in peptide bond synthesis. Stimulates efficient translation and peptide-bond synthesis on native or reconstituted 70S ribosomes in vitro. Probably functions indirectly by altering the affinity of the ribosome for aminoacyl-tRNA, thus increasing their reactivity as acceptors for peptidyl transferase. The protein is Elongation factor P of Ruminiclostridium cellulolyticum (strain ATCC 35319 / DSM 5812 / JCM 6584 / H10) (Clostridium cellulolyticum).